The sequence spans 371 residues: DNA replication and repair protein RecF (371 aa).

30–37 (GANAQGKT) contributes to the ATP binding site.

It belongs to the RecF family.

It localises to the cytoplasm. The RecF protein is involved in DNA metabolism; it is required for DNA replication and normal SOS inducibility. RecF binds preferentially to single-stranded, linear DNA. It also seems to bind ATP. The protein is DNA replication and repair protein RecF of Lacticaseibacillus paracasei (strain ATCC 334 / BCRC 17002 / CCUG 31169 / CIP 107868 / KCTC 3260 / NRRL B-441) (Lactobacillus paracasei).